The chain runs to 400 residues: MAVRWELLRRDPASAARLGRLHTPRGVIETPVFMPVGTQATVKTLNPEEVWDLGARIILSNTYHLYLRPGHDLVQEAGGLHRFMNWKGAVLTDSGGFQVFSLADLRKITEEGVQFRSHIDGSTHFLSPEKAIAVENALGADIIMAFDECTPWPCDYDYAKRSIERTARWAARCKAAHARPDEQALFGIVQGSTFADLRRQSAEEIVALDFPGYGIGGLSVGEPKELMHEMLEVQVPLLPDDRPRYLMGVGSPEDLVEGVWRGVDMFDCVLPTRIARHGTVFVPDGKMTVRNAEFARDFLPIQEGCDCYACRNFSRAYIRHLLKADEMLGLRLCSIHNLRFLVRLMEEIRAALAAGTFAEYRKAFLERWHAGEAERRERARAAGGAGHAPGPAEPLLPENR.

The active-site Proton acceptor is the Asp93. Residues 93-97 (DSGGF), Asp147, Gln190, and Gly217 contribute to the substrate site. Residues 248-254 (GVGSPED) are RNA binding. Catalysis depends on Asp267, which acts as the Nucleophile. Residues 272–276 (TRIAR) are RNA binding; important for wobble base 34 recognition. 4 residues coordinate Zn(2+): Cys305, Cys307, Cys310, and His336. The tract at residues 375–400 (RRERARAAGGAGHAPGPAEPLLPENR) is disordered. The segment covering 388-400 (APGPAEPLLPENR) has biased composition (low complexity).

The protein belongs to the queuine tRNA-ribosyltransferase family. In terms of assembly, homodimer. Within each dimer, one monomer is responsible for RNA recognition and catalysis, while the other monomer binds to the replacement base PreQ1. It depends on Zn(2+) as a cofactor.

It catalyses the reaction 7-aminomethyl-7-carbaguanine + guanosine(34) in tRNA = 7-aminomethyl-7-carbaguanosine(34) in tRNA + guanine. It participates in tRNA modification; tRNA-queuosine biosynthesis. Functionally, catalyzes the base-exchange of a guanine (G) residue with the queuine precursor 7-aminomethyl-7-deazaguanine (PreQ1) at position 34 (anticodon wobble position) in tRNAs with GU(N) anticodons (tRNA-Asp, -Asn, -His and -Tyr). Catalysis occurs through a double-displacement mechanism. The nucleophile active site attacks the C1' of nucleotide 34 to detach the guanine base from the RNA, forming a covalent enzyme-RNA intermediate. The proton acceptor active site deprotonates the incoming PreQ1, allowing a nucleophilic attack on the C1' of the ribose to form the product. After dissociation, two additional enzymatic reactions on the tRNA convert PreQ1 to queuine (Q), resulting in the hypermodified nucleoside queuosine (7-(((4,5-cis-dihydroxy-2-cyclopenten-1-yl)amino)methyl)-7-deazaguanosine). The chain is Queuine tRNA-ribosyltransferase from Symbiobacterium thermophilum (strain DSM 24528 / JCM 14929 / IAM 14863 / T).